We begin with the raw amino-acid sequence, 401 residues long: Ureide permease 4 (401 aa).

The Extracellular segment spans residues 1–10 (MYVVESKAGA). A helical transmembrane segment spans residues 11–31 (IGCMILSLCCLGSWPAILTLL). Topologically, residues 32-40 (ERRGRLPQH) are cytoplasmic. The chain crosses the membrane as a helical span at residues 41–61 (TFLDFATANLLAAIVIAFSLG). The Extracellular portion of the chain corresponds to 62–81 (EIGKSTFLKPDFTTQLPQDN). A helical membrane pass occupies residues 82-102 (WPSVLLAVAGGVLLSIGNLAT). Topologically, residues 103–104 (QY) are cytoplasmic. A helical transmembrane segment spans residues 105–125 (AFAFVGLSVTEVITASITVVI). The Extracellular portion of the chain corresponds to 126–141 (GTTLNYFLDNKINKAE). Residues 142 to 162 (ILFPGVGCFLIAVFLGAAVHA) traverse the membrane as a helical segment. The Cytoplasmic portion of the chain corresponds to 163-231 (SNAADVKEKL…KRAIKVFGKS (69 aa)). 224-231 (AIKVFGKS) contacts ATP. Residues 232 to 252 (IMIGLFITLFAGISLSLFSPA) form a helical membrane-spanning segment. Residues 253-275 (FNLATNDQWSTLPKGVPKLVVYT) are Extracellular-facing. A helical transmembrane segment spans residues 276–296 (AFFYFSIAGFLISLILNLIFL). Topologically, residues 297 to 318 (YRPMVGLARSSLKKYIYDSKGR) are cytoplasmic. Residues 319–339 (GWAVFAGFLCGFGNGLQFMGG) form a helical membrane-spanning segment. At 340–344 (QAAGY) the chain is on the extracellular side. A helical membrane pass occupies residues 345-365 (AAADSVQALPLVSTFWGIVLF). Residues 366-374 (GEYRKSSKR) are Cytoplasmic-facing. The helical transmembrane segment at 375–395 (TYALLVSMLAMFVAAVAILMA) threads the bilayer. The Extracellular portion of the chain corresponds to 396–401 (SSGHRK).

The protein belongs to the plant ureide permease (TC 2.A.7.19) family. Expressed in developing seedlings, flower filaments and stigma, and the top and bottom parts of carpels in siliques.

It localises to the membrane. In terms of biological role, proton-coupled transporter that transports a wide spectrum of oxo derivatives of heterocyclic nitrogen compounds. The polypeptide is Ureide permease 4 (Arabidopsis thaliana (Mouse-ear cress)).